The following is a 26-amino-acid chain: Acyl carrier protein (26 aa).

Residues 2 to 26 (SDIEQRIKQAVAEQLGMRAEEIKNE) enclose the Carrier domain.

This sequence belongs to the acyl carrier protein (ACP) family. In terms of processing, 4'-phosphopantetheine is transferred from CoA to a specific serine of apo-ACP by AcpS. This modification is essential for activity because fatty acids are bound in thioester linkage to the sulfhydryl of the prosthetic group.

It is found in the cytoplasm. The protein operates within lipid metabolism; fatty acid biosynthesis. In terms of biological role, carrier of the growing fatty acid chain in fatty acid biosynthesis. The chain is Acyl carrier protein (acpP) from Acinetobacter calcoaceticus.